Here is a 175-residue protein sequence, read N- to C-terminus: NADH-ubiquinone oxidoreductase chain 6 (175 aa).

5 helical membrane passes run 1-21, 25-45, 47-67, 88-108, and 149-169; these read MMTY…VSFS, SPIY…GIVL, FGGS…MLVV, AVLA…CYIL, and YGTW…LVIM.

Belongs to the complex I subunit 6 family. As to quaternary structure, core subunit of respiratory chain NADH dehydrogenase (Complex I) which is composed of 45 different subunits.

It localises to the mitochondrion inner membrane. It carries out the reaction a ubiquinone + NADH + 5 H(+)(in) = a ubiquinol + NAD(+) + 4 H(+)(out). Core subunit of the mitochondrial membrane respiratory chain NADH dehydrogenase (Complex I) which catalyzes electron transfer from NADH through the respiratory chain, using ubiquinone as an electron acceptor. Essential for the catalytic activity and assembly of complex I. This chain is NADH-ubiquinone oxidoreductase chain 6 (MT-ND6), found in Felis catus (Cat).